The primary structure comprises 330 residues: Phenylalanine--tRNA ligase alpha subunit (330 aa).

A Mg(2+)-binding site is contributed by E257.

This sequence belongs to the class-II aminoacyl-tRNA synthetase family. Phe-tRNA synthetase alpha subunit type 1 subfamily. As to quaternary structure, tetramer of two alpha and two beta subunits. The cofactor is Mg(2+).

Its subcellular location is the cytoplasm. It carries out the reaction tRNA(Phe) + L-phenylalanine + ATP = L-phenylalanyl-tRNA(Phe) + AMP + diphosphate + H(+). This Nostoc punctiforme (strain ATCC 29133 / PCC 73102) protein is Phenylalanine--tRNA ligase alpha subunit.